The following is a 383-amino-acid chain: MEKINDKMAKLTIKRLSPEEEFPDLSQHNNHMAKVLTQDMYTKLRDRATPNGFTIDGVIQTGIDNPGHPFIMTVGCVAGDEETYEVFKELLDPIIEDRHGGYKPTDKHKTDLNPDNLKGGDDLDPNYVISSRVRTGRSIRGFCLPPHCSRGERRGVEKMSVEALDSLSGDLKGKYYALKNMTDAEQQQLIDDHFLFDKPVSPLLLASGMARDWPDGRGIWHNDTKTFLVWVNEEDHLRVISMQKGGNMKEVFNRFCTGLTKIETLFKDKGTSFMWNEHLGYVLTCPSNLGTGLRAGVHVKIPNISKHAKFEEVLKRLRLQKRGTGGVDTAAVGGTFDISNADRLGFSEVELVQMVVDGVKLLVEMEKKLEKGQSIDDLMPAQK.

Residues 14–100 form the Phosphagen kinase N-terminal domain; the sequence is KRLSPEEEFP…LDPIIEDRHG (87 aa). Over residues 99–112 the composition is skewed to basic and acidic residues; the sequence is HGGYKPTDKHKTDL. The tract at residues 99–119 is disordered; that stretch reads HGGYKPTDKHKTDLNPDNLKG. The region spanning 127–369 is the Phosphagen kinase C-terminal domain; the sequence is YVISSRVRTG…KLLVEMEKKL (243 aa). ATP is bound by residues 130 to 134, H193, R238, R294, 322 to 327, and D337; these read SSRVR and RGTGGV.

This sequence belongs to the ATP:guanido phosphotransferase family. As to expression, exists in many tissues, but preferentially in testis.

It catalyses the reaction creatine + ATP = N-phosphocreatine + ADP + H(+). In terms of biological role, reversibly catalyzes the transfer of phosphate between ATP and various phosphogens (e.g. creatine phosphate). Creatine kinase isoenzymes play a central role in energy transduction in tissues with large, fluctuating energy demands, such as skeletal muscle, heart, brain and spermatozoa. This Oncorhynchus mykiss (Rainbow trout) protein is Creatine kinase, testis isozyme (tck1).